The primary structure comprises 162 residues: Functional amyloid chaperone FapA (162 aa).

The N-terminal stretch at 1–28 (MSGSSLRIVVPALLVIVGSVPVSLPAHA) is a signal peptide.

Belongs to the FapA family. Monomer in solution. Interacts with FapC but not FapB in vitro.

It localises to the periplasm. An intrinsically disordered chaperone for fibril amyloid FapC that guards against fibrillation within the periplasm. Upon overexpression of the endogenous six-gene locus (fapA-fapF), cells form large clumps during liquid growth, make large amounts of biofilm and produce amyloid fibrils. This Pseudomonas aeruginosa (strain ATCC 15692 / DSM 22644 / CIP 104116 / JCM 14847 / LMG 12228 / 1C / PRS 101 / PAO1) protein is Functional amyloid chaperone FapA.